We begin with the raw amino-acid sequence, 699 residues long: Auxin response factor 10 (699 aa).

Disordered stretches follow at residues 108–136 (AAEA…DANN), 505–533 (TDLT…DDTK), and 551–595 (KNGN…SWSL). A compositionally biased stretch (basic and acidic residues) spans 110-119 (EARREEENSR). Residues 125-135 (FAKTLTQSDAN) show a composition bias toward polar residues. The TF-B3 DNA-binding region spans 125–227 (FAKTLTQSDA…NIHVGLRRAK (103 aa)). Residues 570 to 593 (PNTSEGSDSGVTQGSPTKNTTPSW) are compositionally biased toward polar residues. Residues 613 to 693 (PGQCKVFVES…RKLRILTDAG (81 aa)) enclose the PB1 domain.

Belongs to the ARF family. As to quaternary structure, homodimers and heterodimers.

It localises to the nucleus. Its function is as follows. Auxin response factors (ARFs) are transcriptional factors that bind specifically to the DNA sequence 5'-TGTCTC-3' found in the auxin-responsive promoter elements (AuxREs). The protein is Auxin response factor 10 (ARF10) of Oryza sativa subsp. indica (Rice).